The chain runs to 511 residues: Cytochrome P450 77A2 (511 aa).

C456 provides a ligand contact to heme.

Belongs to the cytochrome P450 family. Requires heme as cofactor.

This Solanum melongena (Eggplant) protein is Cytochrome P450 77A2 (CYP77A2).